We begin with the raw amino-acid sequence, 412 residues long: Phospholipase A1-IIdelta (412 aa).

Residue alanine 2 is modified to N-acetylalanine. Serine 238 serves as the catalytic Acyl-ester intermediate. Residues serine 238, aspartate 297, and histidine 336 each act as charge relay system in the active site.

This sequence belongs to the AB hydrolase superfamily. Lipase family. Expressed in leaves, stems, flowers and siliques, and, at low levels, in seeds and roots (at protein level).

The protein localises to the cytoplasm. In terms of biological role, acylhydrolase that catalyzes the hydrolysis of phosphatidylcholine (PC) at the sn-1 position. High activity toward PC, medium activity toward monogalactosyldiacylglycerol (MGDG) and low activity toward triacylglycerol (TAG). Confers sensitivity to UV-B radiation probably by deesterifying membrane phospholipids. This is Phospholipase A1-IIdelta from Arabidopsis thaliana (Mouse-ear cress).